A 355-amino-acid polypeptide reads, in one-letter code: Butyrate kinase 1 (355 aa).

Belongs to the acetokinase family.

It localises to the cytoplasm. It catalyses the reaction butanoate + ATP = butanoyl phosphate + ADP. It participates in lipid metabolism; butanoate metabolism. Functionally, catalyzes the conversion of butyryl-CoA through butyryl phosphate to butyrate. This Clostridium acetobutylicum (strain ATCC 824 / DSM 792 / JCM 1419 / IAM 19013 / LMG 5710 / NBRC 13948 / NRRL B-527 / VKM B-1787 / 2291 / W) protein is Butyrate kinase 1 (buk1).